We begin with the raw amino-acid sequence, 366 residues long: Protein FAM110B (366 aa).

3 disordered regions span residues 127–152 (SSEGSSSGSGHKHSSRNWPPHRDTTD), 163–182 (KVYPTPGHGSPQESSSHVSR), and 216–252 (CSSSAPPLPPKPKVAAMKSPEADQVEPACGVSRRPSL). Residues serine 234 and serine 297 each carry the phosphoserine modification. The tract at residues 313-333 (DCEQSQDSNSDLRNDDSANDR) is disordered. Residues 322–331 (SDLRNDDSAN) show a composition bias toward basic and acidic residues.

Belongs to the FAM110 family.

The protein resides in the cytoplasm. Its subcellular location is the cytoskeleton. The protein localises to the microtubule organizing center. It is found in the centrosome. This is Protein FAM110B (Fam110b) from Mus musculus (Mouse).